The following is a 1188-amino-acid chain: Integrin alpha-11 (1188 aa).

The N-terminal stretch at 1-22 (MDFPRGLLVAWTLSLWPGFTDT) is a signal peptide. The Extracellular segment spans residues 23 to 1141 (FNMDTRNPRV…ISKQEDWQVP (1119 aa)). FG-GAP repeat units lie at residues 24 to 85 (NMDT…NCTK) and 91 to 151 (VTLS…FSKT). A disulfide bridge connects residues cysteine 76 and cysteine 83. N-linked (GlcNAc...) asparagine glycosylation is found at asparagine 82 and asparagine 95. 2 disulfide bridges follow: cysteine 121–cysteine 139 and cysteine 129–cysteine 159. The VWFA domain maps to 164–345 (DIVIVLDGSN…AALKDIVDAL (182 aa)). Asparagine 291, asparagine 331, asparagine 358, asparagine 449, and asparagine 462 each carry an N-linked (GlcNAc...) asparagine glycan. FG-GAP repeat units lie at residues 355-406 (TNKN…VIPH), 411-461 (LKEF…SMHN), 462-527 (NRSL…RFVY), 528-586 (NGTL…NILK), and 590-650 (QRIT…FEPS). Residues aspartate 488, asparagine 490, aspartate 492, and aspartate 496 each contribute to the Ca(2+) site. Asparagine 528 carries an N-linked (GlcNAc...) asparagine glycan. The Ca(2+) site is built by aspartate 551, asparagine 553, aspartate 555, aspartate 559, aspartate 613, asparagine 615, aspartate 617, and aspartate 621. A glycan (N-linked (GlcNAc...) asparagine) is linked at asparagine 642. Intrachain disulfides connect cysteine 659-cysteine 668, cysteine 674-cysteine 729, and cysteine 781-cysteine 787. An N-linked (GlcNAc...) asparagine glycan is attached at asparagine 694. A glycan (N-linked (GlcNAc...) asparagine) is linked at asparagine 857. Cysteines 881 and 893 form a disulfide. N-linked (GlcNAc...) asparagine glycans are attached at residues asparagine 894, asparagine 973, asparagine 1031, asparagine 1039, and asparagine 1059. A helical membrane pass occupies residues 1142 to 1164 (IWIIVGSTLGGLLLLALLVLALW). At 1165 to 1188 (KLGFFKSAKRKREPGLGPIPKELK) the chain is on the cytoplasmic side.

This sequence belongs to the integrin alpha chain family. Heterodimer of an alpha and a beta subunit. Alpha-11 associates with beta-1. Interacts with RAB21.

The protein localises to the membrane. In terms of biological role, integrin alpha-11/beta-1 is a receptor for collagen. This is Integrin alpha-11 (Itga11) from Mus musculus (Mouse).